The chain runs to 243 residues: Thiamin pyrophosphokinase 1 (243 aa).

It belongs to the thiamine pyrophosphokinase family.

The catalysed reaction is thiamine + ATP = thiamine diphosphate + AMP + H(+). It functions in the pathway cofactor biosynthesis; thiamine diphosphate biosynthesis; thiamine diphosphate from thiamine: step 1/1. In terms of biological role, catalyzes the phosphorylation of thiamine to thiamine pyrophosphate. Functions cell non-autonomously. The chain is Thiamin pyrophosphokinase 1 from Caenorhabditis elegans.